The following is a 131-amino-acid chain: ER membrane protein complex subunit 5 (131 aa).

Topologically, residues 1 to 3 are cytoplasmic; that stretch reads MAP. Residues 4–22 traverse the membrane as a helical segment; it reads SLWKGLVGIGLFALAHAAL. At 23-43 the chain is on the lumenal side; it reads SAAQHRSYMRLTEKEDESLPI. The chain crosses the membrane as a helical span at residues 44-63; sequence DIVLQTLLAFAVTCYGIVHI. At 64–131 the chain is on the cytoplasmic side; it reads AGEFKDMDAT…KLRKLESLRR (68 aa). Serine 120 carries the phosphoserine modification.

It belongs to the membrane magnesium transporter (TC 1.A.67) family. As to quaternary structure, component of the ER membrane protein complex (EMC).

Its subcellular location is the endoplasmic reticulum membrane. The protein resides in the golgi apparatus membrane. It is found in the early endosome membrane. Part of the endoplasmic reticulum membrane protein complex (EMC) that enables the energy-independent insertion into endoplasmic reticulum membranes of newly synthesized membrane proteins. Preferentially accommodates proteins with transmembrane domains that are weakly hydrophobic or contain destabilizing features such as charged and aromatic residues. Involved in the cotranslational insertion of multi-pass membrane proteins in which stop-transfer membrane-anchor sequences become ER membrane spanning helices. It is also required for the post-translational insertion of tail-anchored/TA proteins in endoplasmic reticulum membranes. By mediating the proper cotranslational insertion of N-terminal transmembrane domains in an N-exo topology, with translocated N-terminus in the lumen of the ER, controls the topology of multi-pass membrane proteins like the G protein-coupled receptors. By regulating the insertion of various proteins in membranes, it is indirectly involved in many cellular processes. May be involved in Mg(2+) transport. The sequence is that of ER membrane protein complex subunit 5 from Pongo abelii (Sumatran orangutan).